The following is a 336-amino-acid chain: Protein-glutamate methylesterase/protein-glutamine glutaminase 2 (336 aa).

A Response regulatory domain is found at 2-119 (KIAIVNDMPM…PNPKEAAAPL (118 aa)). D53 carries the 4-aspartylphosphate modification. The region spanning 147 to 336 (PSRRDRLVAI…APRLIEVFTQ (190 aa)) is the CheB-type methylesterase domain. Catalysis depends on residues S159, H186, and D279.

The protein belongs to the CheB family. In terms of processing, phosphorylated by CheA. Phosphorylation of the N-terminal regulatory domain activates the methylesterase activity.

Its subcellular location is the cytoplasm. The catalysed reaction is [protein]-L-glutamate 5-O-methyl ester + H2O = L-glutamyl-[protein] + methanol + H(+). It catalyses the reaction L-glutaminyl-[protein] + H2O = L-glutamyl-[protein] + NH4(+). Functionally, involved in chemotaxis. Part of a chemotaxis signal transduction system that modulates chemotaxis in response to various stimuli. Catalyzes the demethylation of specific methylglutamate residues introduced into the chemoreceptors (methyl-accepting chemotaxis proteins or MCP) by CheR. Also mediates the irreversible deamidation of specific glutamine residues to glutamic acid. The polypeptide is Protein-glutamate methylesterase/protein-glutamine glutaminase 2 (Pseudomonas syringae pv. syringae (strain B728a)).